The primary structure comprises 94 residues: Citrate lyase acyl carrier protein (94 aa).

Residue S14 is modified to O-(phosphoribosyl dephospho-coenzyme A)serine.

It belongs to the CitD family. As to quaternary structure, oligomer with a subunit composition of (alpha,beta,gamma)6.

It localises to the cytoplasm. In terms of biological role, covalent carrier of the coenzyme of citrate lyase. The sequence is that of Citrate lyase acyl carrier protein from Halothermothrix orenii (strain H 168 / OCM 544 / DSM 9562).